Consider the following 61-residue polypeptide: Large ribosomal subunit protein uL30 (61 aa).

It belongs to the universal ribosomal protein uL30 family. As to quaternary structure, part of the 50S ribosomal subunit.

The sequence is that of Large ribosomal subunit protein uL30 from Legionella pneumophila (strain Paris).